The following is a 92-amino-acid chain: MAKGQSLQDPFLNALRRERVPVSVYLVNGIKLQGTIESFDQFVVLLRNTVSQMVYKHAISTVVPARNVRVGPGGGYVQSNENNQAEDDDVEQ.

The 60-residue stretch at 9-68 folds into the Sm domain; it reads DPFLNALRRERVPVSVYLVNGIKLQGTIESFDQFVVLLRNTVSQMVYKHAISTVVPARNV. Residues 72-92 are disordered; sequence PGGGYVQSNENNQAEDDDVEQ.

Belongs to the Hfq family. Homohexamer.

Functionally, RNA chaperone that binds small regulatory RNA (sRNAs) and mRNAs to facilitate mRNA translational regulation in response to envelope stress, environmental stress and changes in metabolite concentrations. Also binds with high specificity to tRNAs. The chain is RNA-binding protein Hfq from Xanthomonas campestris pv. campestris (strain 8004).